A 395-amino-acid chain; its full sequence is MATHTISRSILCRPAKSLSFLFTRSFASSAPLAKSPASSLLSRSRPLVAAFSSVFRGGLVSVKGLSTQATSSSLNDPNPNWSNRPPKETILLDGCDFEHWLVVVEPPQGEPTRDEIIDSYIKTLAQIVGSEDEARMKIYSVSTRCYYAFGALVSEDLSHKLKELSNVRWVLPDSYLDVRNKDYGGEPFIDGKAVPYDPKYHEEWIRNNARANERNRRNDRPRNNDRSRNFERRRENMAGGPPPQRPPMGGPPPPPHIGGSAPPPPHMGGSAPPPPHMGQNYGPPPPNNMGGPRHPPPYGAPPQNNMGGPRPPQNYGGTPPPNYGGAPPANNMGGAPPPNYGGGPPPQYGAVPPPQYGGAPPQNNNYQQQGSGMQQPQYQNNYPPNRDGSGNPYQG.

The transit peptide at 1 to 56 (MATHTISRSILCRPAKSLSFLFTRSFASSAPLAKSPASSLLSRSRPLVAAFSSVFR) directs the protein to the chloroplast and mitochondrion. Residues 211–236 (ANERNRRNDRPRNNDRSRNFERRREN) show a composition bias toward basic and acidic residues. Residues 211–395 (ANERNRRNDR…RDGSGNPYQG (185 aa)) are disordered. Positions 240 to 300 (GPPPQRPPMG…GPRHPPPYGA (61 aa)) are enriched in pro residues. Residues 313–334 (QNYGGTPPPNYGGAPPANNMGG) are compositionally biased toward low complexity. Over residues 335–355 (APPPNYGGGPPPQYGAVPPPQ) the composition is skewed to pro residues. The span at 356 to 385 (YGGAPPQNNNYQQQGSGMQQPQYQNNYPPN) shows a compositional bias: low complexity.

Belongs to the MORF family. As to quaternary structure, interacts with protoporphyrinogen oxidase 1 PPOX1. Interacts with PCMP-H52/MEF10. Homodimer and heterodimers with MORF1/RIP8, MORF2/RIP2, MORF3/RIP3, MORF4/RIP4, MORF5/RIP5, MORF6/RIP6 and MORF7/RIP7. Interacts with RBG3/ORRM3. Interacts with PCMP-A2/PMD1. Interacts with ORRM1 and VAT3/OZ1. Interacts with PCMP-H13/MEF35. Interacts with RBG5/ORRM4. Interacts with ORRM6.

It is found in the mitochondrion. The protein resides in the plastid. It localises to the chloroplast. Functionally, involved in organellar RNA editing. Required for the processing of numerous RNA editing sites in mitochondria and plastids. Binds to the plastid RARE1 factor, a pentatricopeptide repeat-containing protein involved in RNA editing. The chain is Multiple organellar RNA editing factor 8, chloroplastic/mitochondrial from Arabidopsis thaliana (Mouse-ear cress).